Consider the following 238-residue polypeptide: Orotidine 5'-phosphate decarboxylase (238 aa).

Substrate-binding positions include D10, K32, 59-68 (DLKLHDIPNT), T122, R184, Q193, G213, and R214. K61 serves as the catalytic Proton donor.

It belongs to the OMP decarboxylase family. Type 1 subfamily. In terms of assembly, homodimer.

The catalysed reaction is orotidine 5'-phosphate + H(+) = UMP + CO2. It functions in the pathway pyrimidine metabolism; UMP biosynthesis via de novo pathway; UMP from orotate: step 2/2. In terms of biological role, catalyzes the decarboxylation of orotidine 5'-monophosphate (OMP) to uridine 5'-monophosphate (UMP). In Bacillus anthracis (strain A0248), this protein is Orotidine 5'-phosphate decarboxylase.